The sequence spans 310 residues: Translocator protein BipD (310 aa).

Coiled coils occupy residues 127-171 (DPIL…LQDY) and 250-299 (DTAR…AIST).

It belongs to the invasin protein D family.

Its subcellular location is the secreted. Functionally, required for invasion of epithelial cells, as well as for survival within host cells, escape from endocytic vesicles and subsequent actin-tail formation. Probably regulates the secretion of effectors BipB and BipC and their final integration into the target cell membrane. The protein is Translocator protein BipD (bipD) of Burkholderia thailandensis (strain ATCC 700388 / DSM 13276 / CCUG 48851 / CIP 106301 / E264).